A 98-amino-acid polypeptide reads, in one-letter code: Co-chaperonin GroES 4 (98 aa).

Belongs to the GroES chaperonin family. In terms of assembly, heptamer of 7 subunits arranged in a ring. Interacts with the chaperonin GroEL.

The protein resides in the cytoplasm. In terms of biological role, together with the chaperonin GroEL, plays an essential role in assisting protein folding. The GroEL-GroES system forms a nano-cage that allows encapsulation of the non-native substrate proteins and provides a physical environment optimized to promote and accelerate protein folding. GroES binds to the apical surface of the GroEL ring, thereby capping the opening of the GroEL channel. This Mesorhizobium japonicum (strain LMG 29417 / CECT 9101 / MAFF 303099) (Mesorhizobium loti (strain MAFF 303099)) protein is Co-chaperonin GroES 4.